The chain runs to 371 residues: 3-dehydroquinate synthase (371 aa).

Residues 70-75 (DAEDGK), 104-108 (GAVTD), 128-129 (TT), Lys-141, and Lys-150 contribute to the NAD(+) site. Zn(2+) is bound by residues Glu-183, His-246, and His-262.

This sequence belongs to the sugar phosphate cyclases superfamily. Dehydroquinate synthase family. Requires Co(2+) as cofactor. Zn(2+) is required as a cofactor. It depends on NAD(+) as a cofactor.

It is found in the cytoplasm. It carries out the reaction 7-phospho-2-dehydro-3-deoxy-D-arabino-heptonate = 3-dehydroquinate + phosphate. Its pathway is metabolic intermediate biosynthesis; chorismate biosynthesis; chorismate from D-erythrose 4-phosphate and phosphoenolpyruvate: step 2/7. In terms of biological role, catalyzes the conversion of 3-deoxy-D-arabino-heptulosonate 7-phosphate (DAHP) to dehydroquinate (DHQ). In Saccharopolyspora erythraea (strain ATCC 11635 / DSM 40517 / JCM 4748 / NBRC 13426 / NCIMB 8594 / NRRL 2338), this protein is 3-dehydroquinate synthase.